Reading from the N-terminus, the 278-residue chain is Large ribosomal subunit protein uL2 (278 aa).

Disordered regions lie at residues 32–57 (ALTE…IGGG) and 221–278 (RGVA…KKKR). The segment covering 269 to 278 (IRSRHAKKKR) has biased composition (basic residues).

The protein belongs to the universal ribosomal protein uL2 family. In terms of assembly, part of the 50S ribosomal subunit. Forms a bridge to the 30S subunit in the 70S ribosome.

Functionally, one of the primary rRNA binding proteins. Required for association of the 30S and 50S subunits to form the 70S ribosome, for tRNA binding and peptide bond formation. It has been suggested to have peptidyltransferase activity; this is somewhat controversial. Makes several contacts with the 16S rRNA in the 70S ribosome. The protein is Large ribosomal subunit protein uL2 of Zymomonas mobilis subsp. mobilis (strain ATCC 31821 / ZM4 / CP4).